The chain runs to 59 residues: Large ribosomal subunit protein uL30 (59 aa).

It belongs to the universal ribosomal protein uL30 family. As to quaternary structure, part of the 50S ribosomal subunit.

This chain is Large ribosomal subunit protein uL30, found in Sodalis glossinidius (strain morsitans).